Reading from the N-terminus, the 86-residue chain is Mu-theraphotoxin-Cg2a 3 (86 aa).

The N-terminal stretch at 1–21 is a signal peptide; sequence MKVSVVITLAVLGVMFVWASA. The propeptide occupies 22 to 50; it reads AELKERGSDQRDSPAWIKSMERIFQSEER. Disulfide bonds link Cys52–Cys66, Cys59–Cys71, and Cys65–Cys78. Phenylalanine amide is present on Phe84.

The protein belongs to the neurotoxin 10 (Hwtx-1) family. 37 (Jztx-31) subfamily. Expressed by the venom gland.

The protein resides in the secreted. Its function is as follows. Inhibits both peak current and fast inactivation of voltage-gated sodium channels (Nav) channels. Inhibits the inactivation of Nav on DRG neurons (EC(50)=1.77 uM) and peak current of cardiac myocytes (IC(50)=0.90 uM). This chain is Mu-theraphotoxin-Cg2a 3, found in Chilobrachys guangxiensis (Chinese earth tiger tarantula).